Here is a 329-residue protein sequence, read N- to C-terminus: MSAYIIETLIKILILVAVFSALGGFATYIERKVLAYFQRRLGPSYVGPFGLLQVAADGIKLFTKEDIIPQGANKLIFTLAPIIAMVSAFVSMAPIPFFPNFTLFGYEIKPIISDINIGFLFFLAVGAAGIYAPILAGLASNNKYSLIGSARATIQLLSFEVVSTLTILAPLMVVGSLSLVEINNYQSGGFLDWLVFKQPLAFILFLIASYAELNRTPFDLLEHEAEIVAGYCTEYSGLKWGMFFLAEYAHLFAFSFVISIVFFGGFNAWGFIPGGIAILIKVSFFVFLSMWVRATYPHVRPDQLMNMCWKIMLPLALLNIVLTGVIILI.

Helical transmembrane passes span 9-29 (LIKILILVAVFSALGGFATYI), 42-62 (GPSYVGPFGLLQVAADGIKLF), 75-95 (LIFTLAPIIAMVSAFVSMAPI), 117-137 (IGFLFFLAVGAAGIYAPILAG), 154-174 (IQLLSFEVVSTLTILAPLMVV), 188-208 (GGFLDWLVFKQPLAFILFLIA), 238-258 (LKWGMFFLAEYAHLFAFSFVI), 269-291 (WGFIPGGIAILIKVSFFVFLSMW), and 309-329 (WKIMLPLALLNIVLTGVIILI).

Belongs to the complex I subunit 1 family. NDH-1 is composed of 14 different subunits. Subunits NuoA, H, J, K, L, M, N constitute the membrane sector of the complex.

The protein localises to the cell inner membrane. The enzyme catalyses a quinone + NADH + 5 H(+)(in) = a quinol + NAD(+) + 4 H(+)(out). Functionally, NDH-1 shuttles electrons from NADH, via FMN and iron-sulfur (Fe-S) centers, to quinones in the respiratory chain. The immediate electron acceptor for the enzyme in this species is believed to be ubiquinone. Couples the redox reaction to proton translocation (for every two electrons transferred, four hydrogen ions are translocated across the cytoplasmic membrane), and thus conserves the redox energy in a proton gradient. This subunit may bind ubiquinone. The chain is NADH-quinone oxidoreductase subunit H from Helicobacter acinonychis (strain Sheeba).